Reading from the N-terminus, the 192-residue chain is Small ribosomal subunit protein uS5 (192 aa).

Positions Phe20–Val83 constitute an S5 DRBM domain. The disordered stretch occupies residues Ser162–Ala192.

The protein belongs to the universal ribosomal protein uS5 family. In terms of assembly, part of the 30S ribosomal subunit. Contacts proteins S4 and S8.

With S4 and S12 plays an important role in translational accuracy. Functionally, located at the back of the 30S subunit body where it stabilizes the conformation of the head with respect to the body. In Methylorubrum extorquens (strain CM4 / NCIMB 13688) (Methylobacterium extorquens), this protein is Small ribosomal subunit protein uS5.